The primary structure comprises 126 residues: Holo-[acyl-carrier-protein] synthase (126 aa).

Positions 9 and 58 each coordinate Mg(2+).

The protein belongs to the P-Pant transferase superfamily. AcpS family. Requires Mg(2+) as cofactor.

Its subcellular location is the cytoplasm. It catalyses the reaction apo-[ACP] + CoA = holo-[ACP] + adenosine 3',5'-bisphosphate + H(+). Its function is as follows. Transfers the 4'-phosphopantetheine moiety from coenzyme A to a Ser of acyl-carrier-protein. This is Holo-[acyl-carrier-protein] synthase from Pectobacterium carotovorum subsp. carotovorum (strain PC1).